The sequence spans 279 residues: Energy-coupling factor transporter ATP-binding protein EcfA1 (279 aa).

Residues 5–240 (ITVNNLFFKY…GNRLISLGLD (236 aa)) enclose the ABC transporter domain. 40 to 47 (GHNGSGKS) contributes to the ATP binding site.

The protein belongs to the ABC transporter superfamily. Energy-coupling factor EcfA family. In terms of assembly, forms a stable energy-coupling factor (ECF) transporter complex composed of 2 membrane-embedded substrate-binding proteins (S component), 2 ATP-binding proteins (A component) and 2 transmembrane proteins (T component).

The protein resides in the cell membrane. Functionally, ATP-binding (A) component of a common energy-coupling factor (ECF) ABC-transporter complex. Unlike classic ABC transporters this ECF transporter provides the energy necessary to transport a number of different substrates. The sequence is that of Energy-coupling factor transporter ATP-binding protein EcfA1 from Streptococcus agalactiae serotype Ia (strain ATCC 27591 / A909 / CDC SS700).